The primary structure comprises 625 residues: Tumor necrosis factor receptor superfamily member 11A (625 aa).

A signal peptide spans 1 to 30 (MAPRARRRRQLPAPLLALCVLLVPLQVTLQ). At 31-214 (VTPPCTQERH…PKEAQAYLPS (184 aa)) the chain is on the extracellular side. Cystine bridges form between cysteine 35/cysteine 47, cysteine 48/cysteine 61, cysteine 51/cysteine 69, cysteine 72/cysteine 87, cysteine 93/cysteine 113, cysteine 115/cysteine 128, cysteine 125/cysteine 127, cysteine 134/cysteine 152, and cysteine 155/cysteine 170. 4 TNFR-Cys repeats span residues 35 to 69 (CTQE…DSVC), 72 to 113 (CGPD…PRRC), 115 to 152 (CTAG…DTVC), and 155 to 195 (CLLG…DVVC). N-linked (GlcNAc...) asparagine glycosylation occurs at asparagine 106. Positions 134, 135, 138, 161, and 163 each coordinate Na(+). A glycan (N-linked (GlcNAc...) asparagine) is linked at asparagine 175. A disulfide bridge connects residues cysteine 176 and cysteine 195. A helical transmembrane segment spans residues 215–234 (LIVLLLFISVVVVAAIIFGV). Residues 235–625 (YYRKGGKALT…HTQGSGQCAE (391 aa)) lie on the Cytoplasmic side of the membrane. Disordered regions lie at residues 331–356 (TQGD…STGS), 388–413 (GTES…MPVS), and 479–524 (SMAE…FISS). Over residues 499-511 (SGSSPSDQPPASG) the composition is skewed to low complexity. A compositionally biased stretch (polar residues) spans 512-524 (NVTGNSNSTFISS). The segment at 532 to 537 (GDIIVV) is required for interaction with EEIG1 and osteoclast differentiation. The tract at residues 542–625 (TSQEGPGSAE…HTQGSGQCAE (84 aa)) is disordered. Residues 543–558 (SQEGPGSAEPESEPVG) are compositionally biased toward low complexity. The segment covering 561 to 571 (VQEETLAHRDS) has biased composition (basic and acidic residues). Residue serine 571 is modified to Phosphoserine. The span at 603-625 (RPVQEQGGAQTSLHTQGSGQCAE) shows a compositional bias: polar residues.

In terms of assembly, binds to the clefts between the subunits of the TNFSF11 ligand trimer to form a heterohexamer. Part of a complex composed of EEIG1, TNFRSF11A/RANK, PLCG2, GAB2, TEC and BTK; complex formation increases in the presence of TNFSF11/RANKL. Interacts with TRAF1, TRAF2, TRAF3, TRAF5 and TRAF6. Interacts (via cytoplasmic domain) with GAB2. Interacts (via cytoplasmic domain); with EEIG1 (via N-terminus); when in the presence of TNFSF11/RANKL. Ubiquitous expression with high levels in trabecular bone, thymus, small intestine, lung, brain and kidney. Weakly expressed in spleen and bone marrow.

The protein localises to the cell membrane. It is found in the membrane raft. In terms of biological role, receptor for TNFSF11/RANKL/TRANCE/OPGL; essential for RANKL-mediated osteoclastogenesis. Its interaction with EEIG1 promotes osteoclastogenesis via facilitating the transcription of NFATC1 and activation of PLCG2. Involved in the regulation of interactions between T-cells and dendritic cells. In Mus musculus (Mouse), this protein is Tumor necrosis factor receptor superfamily member 11A (Tnfrsf11a).